The following is a 441-amino-acid chain: Ribosomal protein uS12 methylthiotransferase RimO (441 aa).

One can recognise an MTTase N-terminal domain in the interval 8-118 (PKIGFVSLGC…VLQHVHHYVP (111 aa)). The [4Fe-4S] cluster site is built by Cys-17, Cys-53, Cys-82, Cys-150, Cys-154, and Cys-157. The 238-residue stretch at 136 to 373 (LTPRHYAYLK…MQLQQQISAE (238 aa)) folds into the Radical SAM core domain. A TRAM domain is found at 376–441 (QEKVGREILV…DEYDLWGSRV (66 aa)).

This sequence belongs to the methylthiotransferase family. RimO subfamily. [4Fe-4S] cluster is required as a cofactor.

It localises to the cytoplasm. It catalyses the reaction L-aspartate(89)-[ribosomal protein uS12]-hydrogen + (sulfur carrier)-SH + AH2 + 2 S-adenosyl-L-methionine = 3-methylsulfanyl-L-aspartate(89)-[ribosomal protein uS12]-hydrogen + (sulfur carrier)-H + 5'-deoxyadenosine + L-methionine + A + S-adenosyl-L-homocysteine + 2 H(+). In terms of biological role, catalyzes the methylthiolation of an aspartic acid residue of ribosomal protein uS12. This Salmonella agona (strain SL483) protein is Ribosomal protein uS12 methylthiotransferase RimO.